The chain runs to 59 residues: Large ribosomal subunit protein uL30 (59 aa).

The protein belongs to the universal ribosomal protein uL30 family. Part of the 50S ribosomal subunit.

The polypeptide is Large ribosomal subunit protein uL30 (Mycobacterium sp. (strain JLS)).